The primary structure comprises 74 residues: Antimicrobial peptide 36.4 (74 aa).

The first 22 residues, 1–22 (MKVNVLLAVFLVVMVVTDHCHA), serve as a signal peptide directing secretion. Lys39 is modified (lysine amide). The propeptide occupies 44–74 (LQMEARFQPQNKNYRKRELDLENLFTHMPDY).

It belongs to the non-disulfide-bridged peptide (NDBP) superfamily. Short antimicrobial peptide (group 4) family. Expressed by the venom gland.

It is found in the secreted. The protein localises to the target cell membrane. Cationic host defense peptide that have antibacterial activity by breaking membranes. Is more effective on Gram-positive than on Gram-negative bacteria. The protein is Antimicrobial peptide 36.4 of Lychas mucronatus (Chinese swimming scorpion).